The primary structure comprises 34 residues: Photosystem I reaction center subunit XII (34 aa).

The helical transmembrane segment at 9-29 (LIILGLIVVMHAGVLALRLGI) threads the bilayer.

It belongs to the PsaM family.

The protein resides in the cellular thylakoid membrane. The sequence is that of Photosystem I reaction center subunit XII from Prochlorococcus marinus subsp. pastoris (strain CCMP1986 / NIES-2087 / MED4).